Here is a 550-residue protein sequence, read N- to C-terminus: MNKIIILLIILLSFDIISAAKKFGRKGIRTLGDNEVLLSDGAIRGTVTDTHRVFYGIPFARPPIDELRYEDPQPPKPWSYVRDGTKQRDQCIQDCKLGKGSCSEVGTSEDCLYLDVFIPRTVNPGSKVPVMVFIPGGAFTQGTGSCPLYDGLKFANSSVIVVNVNYRLGVLGFLCTGLLSGNFGFLDQVMALDWVQENIEVFGGDKNQVTIYGESAGAFSVAAHLSSEKSEGKFHRAILSSTPYTVGLKSQTVARGFAGRFSSKIGCDLEDIDCHRSKSPEEILAIQKELGLAIGDKILDAFTIWSPVVDGINVNEQPLTMIKQGTTHDVPTIIGDNQDEAILFVYMTYKNVVIPSSYRTMVHVLFGIANGNKVLEHYPLPGFLKDSRPILSKLLTDYLFRCPGRYHVSKSAQANESPIYHYQYKQVLSGGHSFEACEGLVCHGTELPMVFNTYESALDLDLEEEEEEFAEQLNNYFVNFIKYSNPSHPNGLPTPKVWNPTTKTTNTSLVMKLGFEVKDLITNDPKCDLFDSLSYNGYTKDQNRMRKSKK.

Positions methionine 1–alanine 19 are cleaved as a signal peptide. An intrachain disulfide couples cysteine 91 to cysteine 111. N-linked (GlcNAc...) asparagine glycosylation occurs at asparagine 156. Serine 215 (acyl-ester intermediate) is an active-site residue. A disulfide bridge links cysteine 267 with cysteine 274. Catalysis depends on charge relay system residues glutamate 340 and histidine 443. N-linked (GlcNAc...) asparagine glycosylation occurs at asparagine 506.

Belongs to the type-B carboxylesterase/lipase family.

The protein resides in the cytoplasmic vesicle. The protein localises to the esterosome membrane. In Dictyostelium discoideum (Social amoeba), this protein is Crystal protein (cryS).